A 201-amino-acid chain; its full sequence is Small ribosomal subunit protein uS4 (201 aa).

The tract at residues 21–43 (GTGKELNRRPYAPGDHGQGRRQK) is disordered. The region spanning 93-153 (RRLDNMVYRL…EKSKDMAIIK (61 aa)) is the S4 RNA-binding domain.

Belongs to the universal ribosomal protein uS4 family. As to quaternary structure, part of the 30S ribosomal subunit. Contacts protein S5. The interaction surface between S4 and S5 is involved in control of translational fidelity.

Its function is as follows. One of the primary rRNA binding proteins, it binds directly to 16S rRNA where it nucleates assembly of the body of the 30S subunit. With S5 and S12 plays an important role in translational accuracy. This Levilactobacillus brevis (strain ATCC 367 / BCRC 12310 / CIP 105137 / JCM 1170 / LMG 11437 / NCIMB 947 / NCTC 947) (Lactobacillus brevis) protein is Small ribosomal subunit protein uS4.